The chain runs to 355 residues: Holliday junction branch migration complex subunit RuvB (355 aa).

The disordered stretch occupies residues 1 to 26; that stretch reads MSIQTDDFASSSPAARRVVSTAPASP. Residues 5–196 are large ATPase domain (RuvB-L); sequence TDDFASSSPA…FGIVARLEFY (192 aa). Over residues 9 to 22 the composition is skewed to low complexity; it reads ASSSPAARRVVSTA. ATP-binding positions include L35, R36, G77, K80, T81, T82, 143–145, R186, Y196, and R233; that span reads EDY. Residue T81 coordinates Mg(2+). Residues 197–267 are small ATPAse domain (RuvB-S); the sequence is SVEELARIVT…IADKALAMLD (71 aa). Positions 270 to 355 are head domain (RuvB-H); the sequence is PQGFDVMDRK…TTSGSELFDA (86 aa). R325 and R330 together coordinate DNA.

This sequence belongs to the RuvB family. In terms of assembly, homohexamer. Forms an RuvA(8)-RuvB(12)-Holliday junction (HJ) complex. HJ DNA is sandwiched between 2 RuvA tetramers; dsDNA enters through RuvA and exits via RuvB. An RuvB hexamer assembles on each DNA strand where it exits the tetramer. Each RuvB hexamer is contacted by two RuvA subunits (via domain III) on 2 adjacent RuvB subunits; this complex drives branch migration. In the full resolvosome a probable DNA-RuvA(4)-RuvB(12)-RuvC(2) complex forms which resolves the HJ.

Its subcellular location is the cytoplasm. The catalysed reaction is ATP + H2O = ADP + phosphate + H(+). In terms of biological role, the RuvA-RuvB-RuvC complex processes Holliday junction (HJ) DNA during genetic recombination and DNA repair, while the RuvA-RuvB complex plays an important role in the rescue of blocked DNA replication forks via replication fork reversal (RFR). RuvA specifically binds to HJ cruciform DNA, conferring on it an open structure. The RuvB hexamer acts as an ATP-dependent pump, pulling dsDNA into and through the RuvAB complex. RuvB forms 2 homohexamers on either side of HJ DNA bound by 1 or 2 RuvA tetramers; 4 subunits per hexamer contact DNA at a time. Coordinated motions by a converter formed by DNA-disengaged RuvB subunits stimulates ATP hydrolysis and nucleotide exchange. Immobilization of the converter enables RuvB to convert the ATP-contained energy into a lever motion, pulling 2 nucleotides of DNA out of the RuvA tetramer per ATP hydrolyzed, thus driving DNA branch migration. The RuvB motors rotate together with the DNA substrate, which together with the progressing nucleotide cycle form the mechanistic basis for DNA recombination by continuous HJ branch migration. Branch migration allows RuvC to scan DNA until it finds its consensus sequence, where it cleaves and resolves cruciform DNA. This is Holliday junction branch migration complex subunit RuvB from Methylibium petroleiphilum (strain ATCC BAA-1232 / LMG 22953 / PM1).